The primary structure comprises 49 residues: Large ribosomal subunit protein bL33B (49 aa).

The protein belongs to the bacterial ribosomal protein bL33 family.

The sequence is that of Large ribosomal subunit protein bL33B from Bacillus licheniformis (strain ATCC 14580 / DSM 13 / JCM 2505 / CCUG 7422 / NBRC 12200 / NCIMB 9375 / NCTC 10341 / NRRL NRS-1264 / Gibson 46).